The chain runs to 210 residues: Large ribosomal subunit protein uL3 (210 aa).

The disordered stretch occupies residues 123–144; sequence KRHGQSRGPMAHGSRYHRRPGS.

It belongs to the universal ribosomal protein uL3 family. Part of the 50S ribosomal subunit. Forms a cluster with proteins L14 and L19.

Its function is as follows. One of the primary rRNA binding proteins, it binds directly near the 3'-end of the 23S rRNA, where it nucleates assembly of the 50S subunit. In Alkaliphilus metalliredigens (strain QYMF), this protein is Large ribosomal subunit protein uL3.